Consider the following 213-residue polypeptide: MQLPLALCLVCLLVHTAFRVVEGQGWQAFKNDATEIIPELGEYPEPPPELENNKTMNRAENGGRPPHHPFETKDVSEYSCRELHFTRYVTDGPCRSAKPVTELVCSGQCGPARLLPNAIGRGKWWRPSGPDFRCIPDRYRAQRVQLLCPGGEAPRARKVRLVASCKCKRLTRFHNQSELKDFGTEAARPQKGRKPRPRARSAKANQAELENAY.

The signal sequence occupies residues 1-23 (MQLPLALCLVCLLVHTAFRVVEG). The disordered stretch occupies residues 41–71 (GEYPEPPPELENNKTMNRAENGGRPPHHPFE). A glycan (N-linked (GlcNAc...) asparagine) is linked at N53. 4 cysteine pairs are disulfide-bonded: C80–C134, C94–C148, C105–C165, and C109–C167. Residues 82 to 172 (ELHFTRYVTD…ASCKCKRLTR (91 aa)) enclose the CTCK domain. N-linked (GlcNAc...) asparagine glycosylation occurs at N175. A disordered region spans residues 178-213 (ELKDFGTEAARPQKGRKPRPRARSAKANQAELENAY). Over residues 190 to 201 (QKGRKPRPRARS) the composition is skewed to basic residues.

The protein belongs to the sclerostin family. As to quaternary structure, interacts with LRP4 (via the extracellular domain); the interaction facilitates the inhibition of Wnt signaling. Interacts with LRP5 (via the first two YWTD-EGF repeat domains); the interaction inhibits Wnt-mediated signaling. Interacts with LRP6. As to expression, widely expressed at low levels with highest levels in bone, cartilage, kidney, liver, bone marrow and primary osteoblasts differentiated for 21 days. Detected in the subendothelial layer of the aortic intima (at protein level).

Its subcellular location is the secreted. It is found in the extracellular space. The protein resides in the extracellular matrix. In terms of biological role, negative regulator of bone growth that acts through inhibition of Wnt signaling and bone formation. This is Sclerostin from Homo sapiens (Human).